We begin with the raw amino-acid sequence, 465 residues long: Cysteine--tRNA ligase (465 aa).

A Zn(2+)-binding site is contributed by Cys30. The short motif at 32 to 42 (ITVYDYCHVGH) is the 'HIGH' region element. Residues Cys214, His239, and Glu243 each contribute to the Zn(2+) site. A 'KMSKS' region motif is present at residues 271 to 275 (KMSKS). Lys274 contributes to the ATP binding site.

The protein belongs to the class-I aminoacyl-tRNA synthetase family. In terms of assembly, monomer. Zn(2+) serves as cofactor.

The protein resides in the cytoplasm. It carries out the reaction tRNA(Cys) + L-cysteine + ATP = L-cysteinyl-tRNA(Cys) + AMP + diphosphate. The chain is Cysteine--tRNA ligase from Burkholderia cenocepacia (strain HI2424).